The sequence spans 785 residues: AP-1 complex subunit gamma-like 2 (785 aa).

Residues leucine 369–valine 379 are essential for ubiquitin-binding. The tract at residues glycine 592–glutamate 617 is disordered. The GAE domain occupies alanine 665–proline 780.

Belongs to the adaptor complexes large subunit family. May interact with AP1S1/Sigma1A-adaptin and AP1S2/Sigma1B-adaptin. Probably does not interact with APB1. Interacts (via GAE domain) with RABEP1, NECAP1, CLINT1 and AFTPH/aftiphilin. In terms of assembly, (Microbial infection) Interacts with HBV major surface antigen L. Interacts with HBV core protein C in a ubiquitin-dependent manner. In terms of tissue distribution, expressed in all but one (skeletal muscle) tissues examined.

It localises to the golgi apparatus membrane. The protein localises to the cytoplasmic vesicle membrane. Its subcellular location is the endosome membrane. May function in protein sorting in late endosomes or multivesucular bodies (MVBs). Its function is as follows. (Microbial infection) Involved in MVB-assisted maturation of hepatitis B virus (HBV). The polypeptide is AP-1 complex subunit gamma-like 2 (AP1G2) (Homo sapiens (Human)).